The chain runs to 220 residues: Ribosomal RNA small subunit methyltransferase Nep1 (220 aa).

Residues Gly-178, Gly-183, and 196–201 (LYREPL) each bind S-adenosyl-L-methionine.

Belongs to the class IV-like SAM-binding methyltransferase superfamily. RNA methyltransferase NEP1 family. Homodimer.

It carries out the reaction a pseudouridine in rRNA + S-adenosyl-L-methionine = an N(1)-methylpseudouridine in rRNA + S-adenosyl-L-homocysteine + H(+). Functionally, methyltransferase involved in ribosomal biogenesis. Specifically catalyzes the N1-methylation of the pseudouridine corresponding to position 914 in M.jannaschii 16S rRNA. The chain is Ribosomal RNA small subunit methyltransferase Nep1 from Thermococcus kodakarensis (strain ATCC BAA-918 / JCM 12380 / KOD1) (Pyrococcus kodakaraensis (strain KOD1)).